We begin with the raw amino-acid sequence, 278 residues long: Large ribosomal subunit protein uL2c (278 aa).

The disordered stretch occupies residues 224-256; the sequence is NPVDHPHGGGEGRAPIGRKKPTTPWGYPALGRK.

It belongs to the universal ribosomal protein uL2 family. Part of the 50S ribosomal subunit.

The protein localises to the plastid. The polypeptide is Large ribosomal subunit protein uL2c (rpl2) (Cuscuta exaltata (Tall dodder)).